Consider the following 422-residue polypeptide: MDSILVKGNGELRGQIPIAGAKNACLALMPATLLSDEPLTLTNAPRLSDIRTMTQLLQSLGAEVASLQGGQVLALSSHALTDHRADYDIVRKMRASILVLGPMLARDGHAVVSLPGGCAIGARPVDLHLKALEAMGADLDLRDGYIHAKAPAGGLRGARVAFPIVSVGATENALMAATLAKGTTVLENAAREPEIVDLARCLRRMGAQIEGEGSATITVQGVDRLGGATHPVVTDRIELGTYMLAPAICGGEVELLGGRIELVGAFCEKLDAAGISVEETERGLRVARRNGRVKAVDVTTEPFPGFPTDLQAQMMALLCTAEGTSVLEEKIFENRFMHAPELTRMGARIEVHGGTARVTGVEKLRGAPVMATDLRASVSLILAGLAAEGETVVSRVYHLDRGYERVEEKLSACGAQIRRIPG.

22–23 (KN) lines the phosphoenolpyruvate pocket. UDP-N-acetyl-alpha-D-glucosamine is bound at residue arginine 94. Cysteine 118 (proton donor) is an active-site residue. At cysteine 118 the chain carries 2-(S-cysteinyl)pyruvic acid O-phosphothioketal. UDP-N-acetyl-alpha-D-glucosamine contacts are provided by residues 123 to 127 (RPVDL), aspartate 309, and isoleucine 331.

It belongs to the EPSP synthase family. MurA subfamily.

Its subcellular location is the cytoplasm. It catalyses the reaction phosphoenolpyruvate + UDP-N-acetyl-alpha-D-glucosamine = UDP-N-acetyl-3-O-(1-carboxyvinyl)-alpha-D-glucosamine + phosphate. It functions in the pathway cell wall biogenesis; peptidoglycan biosynthesis. Cell wall formation. Adds enolpyruvyl to UDP-N-acetylglucosamine. The polypeptide is UDP-N-acetylglucosamine 1-carboxyvinyltransferase (Cereibacter sphaeroides (strain ATCC 17025 / ATH 2.4.3) (Rhodobacter sphaeroides)).